Consider the following 583-residue polypeptide: uncharacterized protein (583 aa).

The FAD-binding FR-type domain maps to 162-424 (YGIFAAPILD…RGVQQNPFAK (263 aa)).

Belongs to the flavoprotein pyridine nucleotide cytochrome reductase family. FAD serves as cofactor.

It is found in the mitochondrion. This is an uncharacterized protein from Schizosaccharomyces pombe (strain 972 / ATCC 24843) (Fission yeast).